Here is a 1447-residue protein sequence, read N- to C-terminus: Baculoviral IAP repeat-containing protein 1b (1447 aa).

3 BIR repeats span residues 60-127 (EAKR…CEFL), 159-227 (EEAR…CEFL), and 278-345 (EELR…CVFL). Residues C315, C318, H335, and C342 each coordinate Zn(2+). In terms of domain architecture, NACHT spans 508–802 (SVMCVEGEAG…EFLAAVRLTE (295 aa)). K520 provides a ligand contact to ATP.

As to quaternary structure, component of the NLRC4 inflammasome, at least composed of NLRC4, caspase-1 (CASP1) and some NAIP protein. Interacts with S.typhimurium (Salmonella) PrgJ and B.thailandensis BsaK.

In terms of biological role, sensor component of the NLRC4 inflammasome that specifically recognizes and binds type III secretion system (T3SS) rod proteins such as S.typhimurium (Salmonella) PrgJ and B.thailandensis BsaK from pathogenic bacteria. Association of pathogenic bacteria proteins drives in turn drive assembly and activation of the NLRC4 inflammasome, promoting caspase-1 activation, cytokine production and macrophage pyroptosis. The NLRC4 inflammasome is activated as part of the innate immune response to a range of intracellular bacteria. The NLRC4 inflammasome senses Gram-negative bacteria such as L.pneumophila and P.aeruginosa, enteric pathogens S.typhimurium (Salmonella) and S.flexneri. Prevents motor-neuron apoptosis induced by a variety of signals. This is Baculoviral IAP repeat-containing protein 1b (Naip2) from Mus musculus (Mouse).